The chain runs to 165 residues: Phosphopantetheine adenylyltransferase (165 aa).

Serine 9 contacts substrate. ATP contacts are provided by residues 9 to 10 (SF) and histidine 17. 3 residues coordinate substrate: lysine 41, valine 73, and arginine 87. ATP is bound by residues 88-90 (GLR), glutamate 98, and 123-129 (FTLLSSS).

It belongs to the bacterial CoaD family. In terms of assembly, homohexamer. Mg(2+) serves as cofactor.

The protein resides in the cytoplasm. The catalysed reaction is (R)-4'-phosphopantetheine + ATP + H(+) = 3'-dephospho-CoA + diphosphate. Its pathway is cofactor biosynthesis; coenzyme A biosynthesis; CoA from (R)-pantothenate: step 4/5. Functionally, reversibly transfers an adenylyl group from ATP to 4'-phosphopantetheine, yielding dephospho-CoA (dPCoA) and pyrophosphate. The chain is Phosphopantetheine adenylyltransferase from Herpetosiphon aurantiacus (strain ATCC 23779 / DSM 785 / 114-95).